We begin with the raw amino-acid sequence, 118 residues long: uncharacterized protein (118 aa).

This sequence to S.pombe tam6.

It localises to the mitochondrion. This is an uncharacterized protein from Saccharomyces cerevisiae (strain ATCC 204508 / S288c) (Baker's yeast).